The following is a 663-amino-acid chain: Beta-galactosidase YesZ (663 aa).

Position 106 (Arg106) interacts with substrate. Position 110 (Cys110) interacts with Zn(2+). Asn144 contacts substrate. Glu145 functions as the Proton donor in the catalytic mechanism. Cys153, Cys155, and Cys158 together coordinate Zn(2+). Glu296 acts as the Nucleophile in catalysis. 345–348 (EISH) provides a ligand contact to substrate.

The protein belongs to the glycosyl hydrolase 42 family. In terms of assembly, homotrimer.

It carries out the reaction Hydrolysis of terminal non-reducing beta-D-galactose residues in beta-D-galactosides.. Functionally, may play a role in the degradation of rhamnogalacturonan derived from plant cell walls. This Bacillus subtilis (strain 168) protein is Beta-galactosidase YesZ (yesZ).